The chain runs to 617 residues: Dihydroxy-acid dehydratase (617 aa).

Aspartate 81 contacts Mg(2+). Cysteine 122 serves as a coordination point for [2Fe-2S] cluster. The Mg(2+) site is built by aspartate 123 and lysine 124. Position 124 is an N6-carboxylysine (lysine 124). [2Fe-2S] cluster is bound at residue cysteine 197. Residue glutamate 494 coordinates Mg(2+). Residue serine 520 is the Proton acceptor of the active site.

The protein belongs to the IlvD/Edd family. Homodimer. [2Fe-2S] cluster serves as cofactor. Mg(2+) is required as a cofactor.

The enzyme catalyses (2R)-2,3-dihydroxy-3-methylbutanoate = 3-methyl-2-oxobutanoate + H2O. It carries out the reaction (2R,3R)-2,3-dihydroxy-3-methylpentanoate = (S)-3-methyl-2-oxopentanoate + H2O. It participates in amino-acid biosynthesis; L-isoleucine biosynthesis; L-isoleucine from 2-oxobutanoate: step 3/4. Its pathway is amino-acid biosynthesis; L-valine biosynthesis; L-valine from pyruvate: step 3/4. Functions in the biosynthesis of branched-chain amino acids. Catalyzes the dehydration of (2R,3R)-2,3-dihydroxy-3-methylpentanoate (2,3-dihydroxy-3-methylvalerate) into 2-oxo-3-methylpentanoate (2-oxo-3-methylvalerate) and of (2R)-2,3-dihydroxy-3-methylbutanoate (2,3-dihydroxyisovalerate) into 2-oxo-3-methylbutanoate (2-oxoisovalerate), the penultimate precursor to L-isoleucine and L-valine, respectively. This Frankia casuarinae (strain DSM 45818 / CECT 9043 / HFP020203 / CcI3) protein is Dihydroxy-acid dehydratase.